Consider the following 57-residue polypeptide: Mambalgin-3 (57 aa).

4 disulfide bridges follow: C3–C19, C12–C37, C41–C49, and C50–C55.

This sequence belongs to the three-finger toxin family. Short-chain subfamily. Mambalgin sub-subfamily. Expressed by the venom gland.

The protein resides in the secreted. Its function is as follows. This three-finger toxin inhibits ASIC channels. It acts as a gating modifier toxin by decreasing the apparent proton sensitivity of activation and by slightly increasing the apparent proton sensitivity for inactivation. It binds more tightly to the closed state and to a much lesser extent the inactivated/desensitized state of ASIC1a. It interacts directly with the outside surface of the thumb domain of chicken ASIC1a (ASIC1a), but does not insert into the acidic pocket as suggested previously. This binding leads to relocation of the thumb domain that could disrupt the acidic pocket of cASIC1a. The peptide exerts both stimulatory and inhibitory effects on ASIC1a. It reversibly inhibits rASIC1a (IC(50)=17 nM), rASIC1b (IC(50)= 44 nM) and rASIC1a-rASIC2a (IC(50)=252 nM) channels. In vivo, it shows a potent naloxone-resistant analgesic effect against acute and inflammatory pain upon central and peripheral injection. In addition, it also has an opioid-independent effect on both thermal and mechanical inflammatory pain after systemic administration and is effective against neuropathic pain. In Dendroaspis angusticeps (Eastern green mamba), this protein is Mambalgin-3.